Reading from the N-terminus, the 244-residue chain is Biosynthetic peptidoglycan transglycosylase (244 aa).

A helical transmembrane segment spans residues 26–46; the sequence is FLSYFIGLTVALTFLFRFVPI.

The protein belongs to the glycosyltransferase 51 family.

The protein localises to the cell inner membrane. It carries out the reaction [GlcNAc-(1-&gt;4)-Mur2Ac(oyl-L-Ala-gamma-D-Glu-L-Lys-D-Ala-D-Ala)](n)-di-trans,octa-cis-undecaprenyl diphosphate + beta-D-GlcNAc-(1-&gt;4)-Mur2Ac(oyl-L-Ala-gamma-D-Glu-L-Lys-D-Ala-D-Ala)-di-trans,octa-cis-undecaprenyl diphosphate = [GlcNAc-(1-&gt;4)-Mur2Ac(oyl-L-Ala-gamma-D-Glu-L-Lys-D-Ala-D-Ala)](n+1)-di-trans,octa-cis-undecaprenyl diphosphate + di-trans,octa-cis-undecaprenyl diphosphate + H(+). It participates in cell wall biogenesis; peptidoglycan biosynthesis. Its function is as follows. Peptidoglycan polymerase that catalyzes glycan chain elongation from lipid-linked precursors. The chain is Biosynthetic peptidoglycan transglycosylase from Mannheimia succiniciproducens (strain KCTC 0769BP / MBEL55E).